The following is a 380-amino-acid chain: Glucose-1-phosphate adenylyltransferase (380 aa).

Alpha-D-glucose 1-phosphate contacts are provided by residues Gly164, 179–180, and Ser190; that span reads EK.

This sequence belongs to the bacterial/plant glucose-1-phosphate adenylyltransferase family. Homotetramer.

It carries out the reaction alpha-D-glucose 1-phosphate + ATP + H(+) = ADP-alpha-D-glucose + diphosphate. It functions in the pathway glycan biosynthesis; glycogen biosynthesis. Its function is as follows. Involved in the biosynthesis of ADP-glucose, a building block required for the elongation reactions to produce glycogen. Catalyzes the reaction between ATP and alpha-D-glucose 1-phosphate (G1P) to produce pyrophosphate and ADP-Glc. The polypeptide is Glucose-1-phosphate adenylyltransferase (Lacticaseibacillus casei (strain BL23) (Lactobacillus casei)).